We begin with the raw amino-acid sequence, 165 residues long: Large ribosomal subunit protein uL11 (165 aa).

Residue Ser-38 is modified to Phosphoserine. Residue Lys-40 forms a Glycyl lysine isopeptide (Lys-Gly) (interchain with G-Cter in SUMO2) linkage. Lys-48 participates in a covalent cross-link: Glycyl lysine isopeptide (Lys-Gly) (interchain with G-Cter in ubiquitin). Lys-54 carries the post-translational modification N6-acetyllysine. Residue Lys-83 forms a Glycyl lysine isopeptide (Lys-Gly) (interchain with G-Cter in ubiquitin) linkage. The residue at position 165 (Ser-165) is a Phosphoserine.

Belongs to the universal ribosomal protein uL11 family. As to quaternary structure, component of the large ribosomal subunit. Mature ribosomes consist of a small (40S) and a large (60S) subunit. The 40S subunit contains about 33 different proteins and 1 molecule of RNA (18S). The 60S subunit contains about 49 different proteins and 3 molecules of RNA (28S, 5.8S and 5S). Ubiquitinated at Lys-48 and Lys-83 by RNF14 and RNF25 in response to ribosome collisions (ribosome stalling).

Its subcellular location is the cytoplasm. Component of the large ribosomal subunit. The ribosome is a large ribonucleoprotein complex responsible for the synthesis of proteins in the cell. Binds directly to 26S ribosomal RNA. This chain is Large ribosomal subunit protein uL11 (RPL12), found in Bos taurus (Bovine).